A 696-amino-acid polypeptide reads, in one-letter code: Elongation factor G (696 aa).

One can recognise a tr-type G domain in the interval 8–290 (ERYRNIGIMA…AVLDYLPSPL (283 aa)). GTP-binding positions include 17–24 (AHIDAGKT), 88–92 (DTPGH), and 142–145 (NKMD).

Belongs to the TRAFAC class translation factor GTPase superfamily. Classic translation factor GTPase family. EF-G/EF-2 subfamily.

The protein resides in the cytoplasm. Functionally, catalyzes the GTP-dependent ribosomal translocation step during translation elongation. During this step, the ribosome changes from the pre-translocational (PRE) to the post-translocational (POST) state as the newly formed A-site-bound peptidyl-tRNA and P-site-bound deacylated tRNA move to the P and E sites, respectively. Catalyzes the coordinated movement of the two tRNA molecules, the mRNA and conformational changes in the ribosome. This is Elongation factor G from Nitrosomonas europaea (strain ATCC 19718 / CIP 103999 / KCTC 2705 / NBRC 14298).